The sequence spans 397 residues: MIRYFTAGESHGPALSAIIDGIPAGVAITKEDIDRELRRRQQGYGRGGRMKIEQDSAEVLSGIRFGKTIGSPIALVIRNRDWENWTDKMAQFSSNEETTEKISIPRPGHADLAGRLKYGFNDIRPVIDRSSARETAARVAAGSLARTFLRQLGIEIGSRVASIGSAEDTGSEGPLRSLLEHGAETLSEAADRSEVRMIGEAAGIEAMASIDRAKEQGDTLGGVIEIFITGVPVGLGSYVQHDRRLDSQLAAAVMAVQAIKGVEIGPAFDNARKPGSEVHDAFTLMKGEGVRRPTNRSGGLEGSMSSGEVIHIRAAMKPISSLQSPLQSFNLDTLEPVLSRFERSDTCAVPAAGVVIEAVVAPVIANALLEKLGGDHMDEIRERLERYREALRSAFTG.

R40 and R46 together coordinate NADP(+). FMN-binding positions include 129 to 131 (RSS), 257 to 258 (QA), G302, 317 to 321 (KPISS), and R343.

It belongs to the chorismate synthase family. Homotetramer. It depends on FMNH2 as a cofactor.

It carries out the reaction 5-O-(1-carboxyvinyl)-3-phosphoshikimate = chorismate + phosphate. It participates in metabolic intermediate biosynthesis; chorismate biosynthesis; chorismate from D-erythrose 4-phosphate and phosphoenolpyruvate: step 7/7. Functionally, catalyzes the anti-1,4-elimination of the C-3 phosphate and the C-6 proR hydrogen from 5-enolpyruvylshikimate-3-phosphate (EPSP) to yield chorismate, which is the branch point compound that serves as the starting substrate for the three terminal pathways of aromatic amino acid biosynthesis. This reaction introduces a second double bond into the aromatic ring system. The chain is Chorismate synthase from Chlorobium luteolum (strain DSM 273 / BCRC 81028 / 2530) (Pelodictyon luteolum).